Here is a 33-residue protein sequence, read N- to C-terminus: Dermaseptin-J7 (33 aa).

A Valine amide modification is found at Val-33.

As to expression, expressed by the skin glands.

It localises to the secreted. In terms of biological role, has antimicrobial activity. The protein is Dermaseptin-J7 of Phasmahyla jandaia (Jandaia leaf frog).